We begin with the raw amino-acid sequence, 454 residues long: Zinc finger CCCH domain-containing protein 66 (454 aa).

Positions 1–23 (MAAGAGAGGGGGEGDSNGGGTSP) are enriched in gly residues. Residues 1–30 (MAAGAGAGGGGGEGDSNGGGTSPGGVSAAA) form a disordered region. 5 consecutive C3H1-type zinc fingers follow at residues 66–94 (RIGEPDCSYYMRTGLCRFGMTCKFNHPPN), 111–139 (RVGQPECQYYLKTGTCKFGATCKFHHPRE), 157–185 (RPNEKECAYYLRTGQCKFASTCKFHHPQP), 318–346 (RPDQPECQFYMKTGDCKFGAVCKFHHPKE), and 364–392 (RPGEPVCTFYSRYGICKFGPNCKFDHPMG). The tract at residues 405–454 (DVSSMHYQLSPSPGHPGILLDGGSGRSHRVPQSDSQQIPSGDGNAEREAS) is disordered. A compositionally biased stretch (polar residues) spans 434-443 (VPQSDSQQIP).

This chain is Zinc finger CCCH domain-containing protein 66, found in Oryza sativa subsp. japonica (Rice).